The chain runs to 847 residues: DNA gyrase subunit A (847 aa).

One can recognise a Topo IIA-type catalytic domain in the interval 34-533 (LPDVRDGLKP…NYSDINTSDL (500 aa)). The active-site O-(5'-phospho-DNA)-tyrosine intermediate is the tyrosine 122. Positions 560-566 (QKRGGKG) match the GyrA-box motif.

This sequence belongs to the type II topoisomerase GyrA/ParC subunit family. As to quaternary structure, heterotetramer, composed of two GyrA and two GyrB chains. In the heterotetramer, GyrA contains the active site tyrosine that forms a transient covalent intermediate with DNA, while GyrB binds cofactors and catalyzes ATP hydrolysis.

Its subcellular location is the cytoplasm. It carries out the reaction ATP-dependent breakage, passage and rejoining of double-stranded DNA.. Functionally, a type II topoisomerase that negatively supercoils closed circular double-stranded (ds) DNA in an ATP-dependent manner to modulate DNA topology and maintain chromosomes in an underwound state. Negative supercoiling favors strand separation, and DNA replication, transcription, recombination and repair, all of which involve strand separation. Also able to catalyze the interconversion of other topological isomers of dsDNA rings, including catenanes and knotted rings. Type II topoisomerases break and join 2 DNA strands simultaneously in an ATP-dependent manner. This Buchnera aphidicola subsp. Baizongia pistaciae (strain Bp) protein is DNA gyrase subunit A.